The sequence spans 338 residues: Serpentine receptor class alpha-32 (338 aa).

Helical transmembrane passes span 30–50 (VYVIYIDLVLILALFLSIHAI), 63–83 (ITHLLIASLVYGNVHNASYTI), 120–140 (RFLFIAIELALNVDRIIVILF), 152–172 (GEILNILAVILSFALGCLLHL), 199–219 (LTSYTILSACCAALDFLMMWY), 249–269 (LNSLLQLFVTSIYAISMFVLA), and 289–309 (TTPYSTLLVPIQIKVFIQWIG).

Belongs to the nematode receptor-like protein sra family.

It is found in the membrane. This is Serpentine receptor class alpha-32 (sra-32) from Caenorhabditis elegans.